Reading from the N-terminus, the 134-residue chain is Large ribosomal subunit protein uL16c (134 aa).

Over residues 1-17 (MLSPKRTRFRKQHRGRM) the composition is skewed to basic residues. Residues 1–21 (MLSPKRTRFRKQHRGRMKGIS) are disordered.

The protein belongs to the universal ribosomal protein uL16 family. Part of the 50S ribosomal subunit.

It is found in the plastid. The protein resides in the chloroplast. This chain is Large ribosomal subunit protein uL16c, found in Solanum bulbocastanum (Wild potato).